The chain runs to 166 residues: NAD(P)H-quinone oxidoreductase subunit I, chloroplastic (166 aa).

2 consecutive 4Fe-4S ferredoxin-type domains span residues 55–84 (GRIH…VDWK) and 95–124 (LNYS…MTEE). [4Fe-4S] cluster contacts are provided by Cys64, Cys67, Cys70, Cys74, Cys104, Cys107, Cys110, and Cys114.

It belongs to the complex I 23 kDa subunit family. As to quaternary structure, NDH is composed of at least 16 different subunits, 5 of which are encoded in the nucleus. [4Fe-4S] cluster serves as cofactor.

It is found in the plastid. It localises to the chloroplast thylakoid membrane. The enzyme catalyses a plastoquinone + NADH + (n+1) H(+)(in) = a plastoquinol + NAD(+) + n H(+)(out). It catalyses the reaction a plastoquinone + NADPH + (n+1) H(+)(in) = a plastoquinol + NADP(+) + n H(+)(out). Functionally, NDH shuttles electrons from NAD(P)H:plastoquinone, via FMN and iron-sulfur (Fe-S) centers, to quinones in the photosynthetic chain and possibly in a chloroplast respiratory chain. The immediate electron acceptor for the enzyme in this species is believed to be plastoquinone. Couples the redox reaction to proton translocation, and thus conserves the redox energy in a proton gradient. This is NAD(P)H-quinone oxidoreductase subunit I, chloroplastic from Lactuca sativa (Garden lettuce).